The sequence spans 942 residues: MSDYKHTLNLPETEFPMRGNLAQREPKMLQDWTNKALYHKIRAAKKGKTPFILHDGPPYANGDIHIGHAVNKILKDVIVKSKTLSDFDSPYVPGWDCHGLPIELMVEKKVGKPGKKVTAAEFRQKCRDYAEKQINGQKADFIRLGVLGEWDKPYRTMDFSSEANIIRELGNVVRSGHLEKGFKPVHWCTDCGSALAEAEVEYQDKVSPSIDVRFNIADEASFTKQFTAIGEGLGEGTISVVIWTTTPWTLPANRAVSLHPELEYSLVQVQSENGNERLVVATDLLDECVKRFGFENTHVLGTALGQALENMQVQHPFYDFTVPLILGEHVTTDSGTGCVHTAPGHGVEDFNVGRQYNLEVANPVGANGVYLENTPIFAGEHVFKANEHVVEVLAERGALVHHVKYTHSYPHCWRHKTPLIFRATPQWFISMDKNGLRAASIKEIHKTQWIPEWGESRIESMVAGRPDWCISRQRTWGVPIALFVHKDTGDLHPNTDALIEQVAQRVESEGIQAWWDIDPQEMLGDDADTFVKVLDTLDVWFDSGVSHYFVVDKRDDIPASADLYLEGSDQHRGWFMSSLMTSVATKGHAPYKQVLTHGFTVDGKGKKMSKSLGNTVAPQQVTNKLGADILRLWVASTDYRSEIAVSDEILKRSADAYRRIRNTSRFLLANLTGFNPKTDLVPFEEMVELDKWAVSRAHTMQREIVKAYEAYDLLVVTQKLMQFCSIEMGSFYLDIIKDRQYTAKSDSHARRSCQSALYHIVEALVRWMAPITSFTAQEIWQEMPWQEDEFVFTGTWYTGLTAQADNTEFNDAFWQQVLAVKDEVNRTIELARKEGTIGGSLEAEVKIYATAELAELLSKLQDEARFVFITSSATVEAVESKPADATETEVPGLWLHISASEGKKCARCWHHREDVGTNESHPELCQRCVTNVDGEGETRAYA.

Positions 58 to 68 (PYANGDIHIGH) match the 'HIGH' region motif. Glutamate 566 is an L-isoleucyl-5'-AMP binding site. A 'KMSKS' region motif is present at residues 607-611 (KMSKS). Lysine 610 is an ATP binding site. Zn(2+) contacts are provided by cysteine 905, cysteine 908, cysteine 925, and cysteine 928.

This sequence belongs to the class-I aminoacyl-tRNA synthetase family. IleS type 1 subfamily. As to quaternary structure, monomer. Zn(2+) serves as cofactor.

It is found in the cytoplasm. The enzyme catalyses tRNA(Ile) + L-isoleucine + ATP = L-isoleucyl-tRNA(Ile) + AMP + diphosphate. Catalyzes the attachment of isoleucine to tRNA(Ile). As IleRS can inadvertently accommodate and process structurally similar amino acids such as valine, to avoid such errors it has two additional distinct tRNA(Ile)-dependent editing activities. One activity is designated as 'pretransfer' editing and involves the hydrolysis of activated Val-AMP. The other activity is designated 'posttransfer' editing and involves deacylation of mischarged Val-tRNA(Ile). The polypeptide is Isoleucine--tRNA ligase (Pseudoalteromonas atlantica (strain T6c / ATCC BAA-1087)).